The following is a 499-amino-acid chain: Na(+)/H(+) antiporter NhaB (499 aa).

11 helical membrane passes run P33–F53, P66–Y86, V89–M109, A128–L148, F237–I257, A305–I325, G326–G346, F349–I369, M393–V413, A449–I469, and V477–I497.

This sequence belongs to the NhaB Na(+)/H(+) (TC 2.A.34) antiporter family.

The protein resides in the cell inner membrane. The enzyme catalyses 2 Na(+)(in) + 3 H(+)(out) = 2 Na(+)(out) + 3 H(+)(in). In terms of biological role, na(+)/H(+) antiporter that extrudes sodium in exchange for external protons. This chain is Na(+)/H(+) antiporter NhaB, found in Hahella chejuensis (strain KCTC 2396).